The primary structure comprises 434 residues: Mannose-6-phosphate isomerase (434 aa).

Zn(2+)-binding residues include Gln109, His111, and Glu136. Polar residues predominate over residues 181 to 191 (SLGLPTSQPPD). The interval 181–200 (SLGLPTSQPPDTSLFKPTES) is disordered. His291 contributes to the Zn(2+) binding site. Arg310 is an active-site residue.

This sequence belongs to the mannose-6-phosphate isomerase type 1 family. Zn(2+) is required as a cofactor.

Its subcellular location is the cytoplasm. It catalyses the reaction D-mannose 6-phosphate = D-fructose 6-phosphate. It functions in the pathway nucleotide-sugar biosynthesis; GDP-alpha-D-mannose biosynthesis; alpha-D-mannose 1-phosphate from D-fructose 6-phosphate: step 1/2. Its function is as follows. Involved in the synthesis of the GDP-mannose and dolichol-phosphate-mannose required for a number of critical mannosyl transfer reactions. The protein is Mannose-6-phosphate isomerase (MAN1) of Cryptococcus neoformans var. neoformans serotype D (strain JEC21 / ATCC MYA-565) (Filobasidiella neoformans).